The chain runs to 1337 residues: GTPase activating protein homolog 3 (1337 aa).

Residues 14–264 form the F-BAR domain; sequence PESFADLWDG…LINSINNEDE (251 aa). Disordered regions lie at residues 279 to 328 and 345 to 392; these read PKPF…LPIF and ITNS…RFST. A compositionally biased stretch (pro residues) spans 293-302; it reads TPPPPPPPQI. Residues 345-358 are compositionally biased toward polar residues; that stretch reads ITNSLSLSSDSLQT. The Rho-GAP domain occupies 422–611; sequence CKIEDIMVAQ…NIIEHFKPLQ (190 aa). Disordered stretches follow at residues 612 to 689, 733 to 781, and 794 to 821; these read VNDS…TTNT, VNNN…HTVA, and ITTP…SPSE. Composition is skewed to low complexity over residues 621 to 637, 645 to 687, and 734 to 772; these read SSSS…SIES, SSTN…SSTT, and NNNN…QQVS. The stretch at 830–859 forms a coiled coil; sequence YLEDQERCKQRIDELHTQVNELYSDITTIE. 2 disordered regions span residues 1041–1102 and 1114–1166; these read SDPD…INNS and KSAL…AHAI. Residues 1047-1063 show a composition bias toward polar residues; the sequence is SPPTISNTTNRLLNTSG. Low complexity-rich tracts occupy residues 1064-1102 and 1114-1159; these read STDF…INNS and KSAL…TTTN. Positions 1189-1219 form a coiled coil; that stretch reads LEINNKLHSQLTEELKKKQQQYKQLIFDIID.

It localises to the cytoplasm. The protein resides in the contractile vacuole. Its function is as follows. Rho GTPase-activating protein involved in the signal transduction pathway. The sequence is that of GTPase activating protein homolog 3 (mgp3) from Dictyostelium discoideum (Social amoeba).